The following is a 36-amino-acid chain: Tddefensin (36 aa).

3 cysteine pairs are disulfide-bonded: Cys3-Cys24, Cys10-Cys32, and Cys14-Cys34.

Belongs to the invertebrate defensin family. Expressed by the venom gland.

The protein localises to the secreted. Its function is as follows. Antibacterial peptide mostly active against Gram-positive bacteria. This Tityus discrepans (Venezuelan scorpion) protein is Tddefensin.